Here is a 375-residue protein sequence, read N- to C-terminus: Glucokinase 1 (375 aa).

Cys25–Ser30 contributes to the ATP binding site.

This sequence belongs to the bacterial glucokinase family. As to quaternary structure, monomer. Post-translationally, the N-terminus is blocked.

The enzyme catalyses D-glucose + ATP = D-glucose 6-phosphate + ADP + H(+). The chain is Glucokinase 1 (GK1) from Trichomonas vaginalis.